Here is a 541-residue protein sequence, read N- to C-terminus: Glucose-6-phosphate isomerase (541 aa).

Glutamate 346 (proton donor) is an active-site residue. Catalysis depends on residues histidine 377 and lysine 506.

It belongs to the GPI family.

The protein localises to the cytoplasm. It catalyses the reaction alpha-D-glucose 6-phosphate = beta-D-fructose 6-phosphate. It functions in the pathway carbohydrate biosynthesis; gluconeogenesis. It participates in carbohydrate degradation; glycolysis; D-glyceraldehyde 3-phosphate and glycerone phosphate from D-glucose: step 2/4. Its function is as follows. Catalyzes the reversible isomerization of glucose-6-phosphate to fructose-6-phosphate. The protein is Glucose-6-phosphate isomerase of Agrobacterium fabrum (strain C58 / ATCC 33970) (Agrobacterium tumefaciens (strain C58)).